We begin with the raw amino-acid sequence, 152 residues long: Deoxyuridine 5'-triphosphate nucleotidohydrolase (152 aa).

Residues 71-73, N84, 88-90, and M98 each bind substrate; these read RSG and LID.

This sequence belongs to the dUTPase family. Requires Mg(2+) as cofactor.

The enzyme catalyses dUTP + H2O = dUMP + diphosphate + H(+). It participates in pyrimidine metabolism; dUMP biosynthesis; dUMP from dCTP (dUTP route): step 2/2. This enzyme is involved in nucleotide metabolism: it produces dUMP, the immediate precursor of thymidine nucleotides and it decreases the intracellular concentration of dUTP so that uracil cannot be incorporated into DNA. This chain is Deoxyuridine 5'-triphosphate nucleotidohydrolase, found in Shewanella pealeana (strain ATCC 700345 / ANG-SQ1).